The sequence spans 765 residues: MTTYLEFIQQNEERDGVRFSWNVWPSSRLEATRMVVPVAALFTPLKERPDLPPIQYEPVLCSRTTCRAVLNPLCQVDYRAKLWACNFCYQRNQFPPTYAGISELNQPAELLPQFSSIEYVVLRGPQMPLIFLYVVDTCIEDEDLQALKESMQMSLSLLPPTALVGLITFGRMVQVHELGCEGISKSYVFRGTKDLSAKQLQEMLGLSKVPVTQATRGPQVQQPPPSNRFLQPVQKIDMNLTDLLGELQRDPWPVPQGKRPLRSSGVALSIAVGLLECTFPNTGARIMMFIGGPATQGPGMVVGDELKTPIRSWHDIEKDNAKYVKKGTKHFEALANRAATTGHVIDIYACALDQTGLLEMKCCPNLTGGYMVMGDSFNTSLFKQTFQRVFTKDIHGQFKMGFGGTLEIKTSREIKISGAIGPCVSLNSKGPCVSENEIGTGGTCQWKICGLSPTTTLAIYFEVVNQHNAPIPQGGRGAVQFVTQYQHSSGQRRIRVTTIARNWADAQTQIQNIAASFDQEAAAILMARLAIYRAETEEGPDVLRWLDRQLIRLCQKFGEYHKDDPNSFRFSETFSLYPQFMFHLRRSPFLQVFNNSPDESSYYRHHFMRQDLTQSLIMIQPILYAYSFSGPPEPVLLDSSSILADRILLMDTFFQILIYHGETIAQWRKSGYQDMPEYENFRHLLQAPVDDAQEILHSRFPMPRYIDTEHGGSQARFLLSKVNPSQTHNNMYAWGQESGAPILTDDVSLQVFMDHLKKLAVSSAA.

T2 is subject to N-acetylthreonine. Zn(2+) is bound by residues C61, C66, C85, and C88. T308 bears the Phosphothreonine mark. The Gelsolin-like repeat unit spans residues 632–718 (PEPVLLDSSS…EHGGSQARFL (87 aa)).

Belongs to the SEC23/SEC24 family. SEC23 subfamily. COPII is composed of at least five proteins: the Sec23/24 complex, the Sec13/31 complex and Sar1. Interacts with SEC23IP. Interacts with HTR4. Interacts with SEC16A. Interacts with SLC6A4. Interacts (as part of the Sec23/24 complex) with SEC22B; recruits SEC22B into COPII-coated vesicles and allows the transport of this cargo from the endoplasmic reticulum to the Golgi. Interacts (via Gelsolin-like repeat) with MIA2 and MIA3; specifically involved in the transport of large cargos like the collagen COL7A1. Interacts with DDHD1. Interacts with TMEM39A. Interacts with SACM1L; this interaction is reduced in the absence of TMEM39A. Interacts with kinase FAM20C; transport of FAM20C from the endoplasmic reticulum to the Golgi is likely to be mediated by COPII vesicles. High levels in brain and fibroblasts.

The protein resides in the cytoplasmic vesicle. It is found in the COPII-coated vesicle membrane. Its subcellular location is the endoplasmic reticulum membrane. The protein localises to the cytoplasm. It localises to the cytosol. In terms of biological role, component of the coat protein complex II (COPII) which promotes the formation of transport vesicles from the endoplasmic reticulum (ER). The coat has two main functions, the physical deformation of the endoplasmic reticulum membrane into vesicles and the selection of cargo molecules for their transport to the Golgi complex. Required for the translocation of insulin-induced glucose transporter SLC2A4/GLUT4 to the cell membrane. In Mus musculus (Mouse), this protein is Protein transport protein Sec23A.